The following is a 36-amino-acid chain: Photosystem I reaction center subunit VIII (36 aa).

The chain crosses the membrane as a helical span at residues 8–28 (SFFVPLVCLVFPAIAMAFLFV).

It belongs to the PsaI family.

The protein resides in the plastid. The protein localises to the chloroplast thylakoid membrane. In terms of biological role, may help in the organization of the PsaL subunit. This chain is Photosystem I reaction center subunit VIII, found in Chara vulgaris (Common stonewort).